The chain runs to 649 residues: Drebrin (649 aa).

Ala-2 carries the N-acetylalanine modification. Residues Gly-3–Ser-134 enclose the ADF-H domain. A phosphoserine mark is found at Ser-141 and Ser-142. 2 stretches are compositionally biased toward basic and acidic residues: residues Gln-208 to Arg-236 and Asp-288 to Glu-298. 3 disordered regions span residues Gln-208 to Asp-420, Asp-477 to Thr-502, and Glu-538 to Val-620. Thr-331 and Thr-335 each carry phosphothreonine. A compositionally biased stretch (polar residues) spans Pro-334–Val-348. Phosphoserine is present on residues Ser-337, Ser-339, and Ser-345. Residue Thr-346 is modified to Phosphothreonine. Positions Gln-363–Ala-374 are enriched in pro residues. Ser-416 bears the Phosphoserine mark. At Thr-497 the chain carries Phosphothreonine. Residues Asn-582–Ser-594 show a composition bias toward polar residues. Residue Ser-601 is modified to Phosphoserine.

As to quaternary structure, interacts with RUFY3. Interacts with CXCR4; this interaction is enhanced by antigenic stimulation. Interacts (via ADF-H domain) with ZMYND8 (via N-terminus); the interaction leads to sequestering of ZMYND8 in the cytoplasm. As to expression, expressed in the brain, with expression in the molecular layer of the dentate gyrus, stratum pyramidale, and stratum radiatum of the hippocampus (at protein level). Also expressed in the terminal varicosities distributed along dendritic trees of pyramidal cells in CA4 and CA3 of the hippocampus (at protein level). Expressed in pyramidal cells in CA2, CA1 and the subiculum of the hippocampus (at protein level). Expressed in peripheral blood lymphocytes, including T-cells (at protein level). Expressed in the brain. Expressed in the heart, placenta, lung, skeletal muscle, kidney, pancreas, skin fibroblasts, gingival fibroblasts and bone-derived cells.

Its subcellular location is the cytoplasm. The protein resides in the cell projection. The protein localises to the dendrite. It localises to the cell cortex. It is found in the cell junction. Its subcellular location is the growth cone. Functionally, actin cytoskeleton-organizing protein that plays a role in the formation of cell projections. Required for actin polymerization at immunological synapses (IS) and for the recruitment of the chemokine receptor CXCR4 to IS. Plays a role in dendritic spine morphogenesis and organization, including the localization of the dopamine receptor DRD1 to the dendritic spines. Involved in memory-related synaptic plasticity in the hippocampus. The chain is Drebrin (DBN1) from Homo sapiens (Human).